We begin with the raw amino-acid sequence, 243 residues long: 1-(5-phosphoribosyl)-5-[(5-phosphoribosylamino)methylideneamino] imidazole-4-carboxamide isomerase (243 aa).

The active-site Proton acceptor is D8. D130 functions as the Proton donor in the catalytic mechanism.

It belongs to the HisA/HisF family.

The protein localises to the cytoplasm. The enzyme catalyses 1-(5-phospho-beta-D-ribosyl)-5-[(5-phospho-beta-D-ribosylamino)methylideneamino]imidazole-4-carboxamide = 5-[(5-phospho-1-deoxy-D-ribulos-1-ylimino)methylamino]-1-(5-phospho-beta-D-ribosyl)imidazole-4-carboxamide. The protein operates within amino-acid biosynthesis; L-histidine biosynthesis; L-histidine from 5-phospho-alpha-D-ribose 1-diphosphate: step 4/9. The chain is 1-(5-phosphoribosyl)-5-[(5-phosphoribosylamino)methylideneamino] imidazole-4-carboxamide isomerase from Acinetobacter baylyi (strain ATCC 33305 / BD413 / ADP1).